A 1779-amino-acid chain; its full sequence is Collagen alpha-1(IV) chain (1779 aa).

An N-terminal signal peptide occupies residues 1–23 (MLPFWKRLLYAAVIAGALVGADA). N-linked (GlcNAc...) asparagine glycosylation occurs at asparagine 72. 4 disordered regions span residues 89-643 (GNRG…KPAL), 655-1187 (DKGY…LPGL), 1200-1285 (TGAP…IGPR), and 1336-1530 (GLPG…RGYE). The segment covering 144–163 (QAGVPGVQGPAGNPGAPGIN) has biased composition (low complexity). 2 stretches are compositionally biased toward basic and acidic residues: residues 196 to 217 (KGEK…KGEP) and 249 to 259 (PRGEHGLKGEK). A compositionally biased stretch (low complexity) spans 360–369 (PGLNGLPGNP). Positions 434–443 (GQKGGAGLPG) are enriched in gly residues. Residues 531-545 (GRPGTPGAAGAPGQK) show a composition bias toward low complexity. The span at 724 to 747 (PGFHGRDGAKGDKGSFGRSGEKGE) shows a compositional bias: basic and acidic residues. Composition is skewed to low complexity over residues 913 to 931 (VGPI…PGID) and 1015 to 1036 (PGLM…QGLD). The segment covering 1106–1127 (EKGDQGRSGIDGRDGINGEKGE) has biased composition (basic and acidic residues). Positions 1151–1170 (APGMDGLPGAAGAPGAVGYP) are enriched in low complexity. 3 stretches are compositionally biased toward basic and acidic residues: residues 1224-1245 (IRGD…EQGE), 1496-1505 (ERGEKGERGL), and 1517-1529 (PKGD…ERGY). Positions 1555–1778 (GILITRHSQS…SRCQVCMKNS (224 aa)) constitute a Collagen IV NC1 domain. 6 disulfides stabilise this stretch: cysteine 1570-cysteine 1659, cysteine 1603-cysteine 1656, cysteine 1615-cysteine 1621, cysteine 1678-cysteine 1774, cysteine 1712-cysteine 1771, and cysteine 1724-cysteine 1731.

It belongs to the type IV collagen family. In terms of assembly, trimers of two alpha 1(IV) and one alpha 2(IV) chain. Type IV collagen forms a mesh-like network linked through intermolecular interactions between 7S domains and between NC1 domains. In terms of processing, prolines at the third position of the tripeptide repeating unit (G-X-Y) are hydroxylated in some or all of the chains. Type IV collagens contain numerous cysteine residues which are involved in inter- and intramolecular disulfide bonding. 12 of these, located in the NC1 domain, are conserved in all known type IV collagens.

It is found in the secreted. It localises to the extracellular space. Its subcellular location is the extracellular matrix. The protein resides in the basement membrane. Collagen type IV is specific for basement membranes. This Drosophila melanogaster (Fruit fly) protein is Collagen alpha-1(IV) chain.